The chain runs to 285 residues: Transcription factor E2F6 (285 aa).

Residue Lys9 forms a Glycyl lysine isopeptide (Lys-Gly) (interchain with G-Cter in SUMO2) linkage. A DNA-binding region spans residues 50-129 (YVSMRKALKV…SKNHIRWIGS (80 aa)). The DEF box motif lies at 95 to 129 (KLGVRKRRVYDITNVLDGIDLVEKKSKNHIRWIGS). Positions 130–222 (DLSNFGAVPQ…PAPKEDSITV (93 aa)) are dimerization. The interval 143–164 (LQEELSDLSAMEDALDELIKDC) is leucine-zipper. The transcription repression stretch occupies residues 173–285 (DDKENERLAY…QSEEVLEVSN (113 aa)). Positions 240-285 (QGSHSSNKTSDNVGTSSSKSKPLEHPQPEKEENPPQQSEEVLEVSN) are disordered. A compositionally biased stretch (polar residues) spans 241-259 (GSHSSNKTSDNVGTSSSKS). Positions 260–272 (KPLEHPQPEKEEN) are enriched in basic and acidic residues.

The protein belongs to the E2F/DP family. In terms of assembly, forms heterodimers with DP family members TFDP1 or TFDP2. Component of the DRTF1/E2F transcription factor complex. Part of the E2F6.com-1 complex in G0 phase composed of E2F6, MGA, MAX, TFDP1, CBX3, BAT8, EUHMTASE1, RING1, RNF2, MBLR, L3MBTL2 and YAF2. Component of some MLL1/MLL complex, at least composed of the core components KMT2A/MLL1, ASH2L, HCFC1/HCF1, WDR5 and RBBP5, as well as the facultative components BACC1, CHD8, E2F6, HSP70, INO80C, KANSL1, LAS1L, MAX, MCRS1, MGA, KAT8/MOF, PELP1, PHF20, PRP31, RING2, RUVB1/TIP49A, RUVB2/TIP49B, SENP3, TAF1, TAF4, TAF6, TAF7, TAF9 and TEX10.

It is found in the nucleus. Its function is as follows. Inhibitor of E2F-dependent transcription. Binds DNA cooperatively with DP proteins through the E2 recognition site, 5'-TTTC[CG]CGC-3'. Has a preference for the 5'-TTTCCCGC-3' E2F recognition site. E2F6 lacks the transcriptional activation and pocket protein binding domains. Appears to regulate a subset of E2F-dependent genes whose products are required for entry into the cell cycle but not for normal cell cycle progression. Represses expression of some meiosis-specific genes, including SLC25A31/ANT4. May silence expression via the recruitment of a chromatin remodeling complex containing histone H3-K9 methyltransferase activity. Overexpression delays the exit of cells from the S-phase. This Bos taurus (Bovine) protein is Transcription factor E2F6.